Consider the following 436-residue polypeptide: Glutamyl-tRNA reductase (436 aa).

Substrate is bound by residues 49 to 52, Ser-109, 114 to 116, and Gln-120; these read TCNR and EGQ. Cys-50 functions as the Nucleophile in the catalytic mechanism. 198–203 provides a ligand contact to NADP(+); the sequence is GAGRMS.

This sequence belongs to the glutamyl-tRNA reductase family. Homodimer.

The catalysed reaction is (S)-4-amino-5-oxopentanoate + tRNA(Glu) + NADP(+) = L-glutamyl-tRNA(Glu) + NADPH + H(+). Its pathway is porphyrin-containing compound metabolism; protoporphyrin-IX biosynthesis; 5-aminolevulinate from L-glutamyl-tRNA(Glu): step 1/2. It participates in porphyrin-containing compound metabolism; chlorophyll biosynthesis. Functionally, catalyzes the NADPH-dependent reduction of glutamyl-tRNA(Glu) to glutamate 1-semialdehyde (GSA). The protein is Glutamyl-tRNA reductase of Prochlorococcus marinus (strain MIT 9301).